An 84-amino-acid chain; its full sequence is Small ribosomal subunit protein uS17 (84 aa).

This sequence belongs to the universal ribosomal protein uS17 family. In terms of assembly, part of the 30S ribosomal subunit.

One of the primary rRNA binding proteins, it binds specifically to the 5'-end of 16S ribosomal RNA. In Vibrio atlanticus (strain LGP32) (Vibrio splendidus (strain Mel32)), this protein is Small ribosomal subunit protein uS17.